The primary structure comprises 983 residues: Probable beta-galactosidase C (983 aa).

The first 23 residues, M1–G23, serve as a signal peptide directing secretion. Y82, N127, A128, E129, and N187 together coordinate substrate. E188 (proton donor) is an active-site residue. N197 carries N-linked (GlcNAc...) asparagine glycosylation. Position 251 (Y251) interacts with substrate. C257 and C304 form a disulfide bridge. Residue N276 is glycosylated (N-linked (GlcNAc...) asparagine). Residue E287 is the Nucleophile of the active site. Y353 is a binding site for substrate. 9 N-linked (GlcNAc...) asparagine glycosylation sites follow: N391, N434, N466, N516, N601, N676, N714, N719, and N804.

Belongs to the glycosyl hydrolase 35 family.

Its subcellular location is the secreted. It catalyses the reaction Hydrolysis of terminal non-reducing beta-D-galactose residues in beta-D-galactosides.. Functionally, cleaves beta-linked terminal galactosyl residues from gangliosides, glycoproteins, and glycosaminoglycans. The polypeptide is Probable beta-galactosidase C (lacC) (Neosartorya fischeri (strain ATCC 1020 / DSM 3700 / CBS 544.65 / FGSC A1164 / JCM 1740 / NRRL 181 / WB 181) (Aspergillus fischerianus)).